A 342-amino-acid chain; its full sequence is GTP 3',8-cyclase (342 aa).

A Radical SAM core domain is found at 18-247 (GFSRRFYYLR…QLRGADDGPA (230 aa)). Arginine 27 provides a ligand contact to GTP. [4Fe-4S] cluster is bound by residues cysteine 34 and cysteine 38. Tyrosine 40 is an S-adenosyl-L-methionine binding site. Residue cysteine 41 coordinates [4Fe-4S] cluster. Arginine 81 provides a ligand contact to GTP. Glycine 85 is a binding site for S-adenosyl-L-methionine. Threonine 112 contacts GTP. Residue serine 136 participates in S-adenosyl-L-methionine binding. GTP is bound at residue lysine 173. Residue methionine 207 coordinates S-adenosyl-L-methionine. The [4Fe-4S] cluster site is built by cysteine 270 and cysteine 273. 275 to 277 (RLR) lines the GTP pocket. Residue cysteine 287 participates in [4Fe-4S] cluster binding.

It belongs to the radical SAM superfamily. MoaA family. As to quaternary structure, monomer and homodimer. It depends on [4Fe-4S] cluster as a cofactor.

The enzyme catalyses GTP + AH2 + S-adenosyl-L-methionine = (8S)-3',8-cyclo-7,8-dihydroguanosine 5'-triphosphate + 5'-deoxyadenosine + L-methionine + A + H(+). It participates in cofactor biosynthesis; molybdopterin biosynthesis. In terms of biological role, catalyzes the cyclization of GTP to (8S)-3',8-cyclo-7,8-dihydroguanosine 5'-triphosphate. This chain is GTP 3',8-cyclase, found in Aeromonas hydrophila subsp. hydrophila (strain ATCC 7966 / DSM 30187 / BCRC 13018 / CCUG 14551 / JCM 1027 / KCTC 2358 / NCIMB 9240 / NCTC 8049).